The following is a 114-amino-acid chain: Cystatin Pr17a (114 aa).

A signal peptide spans 1-18; it reads MSCLKIITLFLFLAAVIA. In terms of domain architecture, Cystatin spans 31 to 109; sequence GAPEQINPND…QAWLKKTSVK (79 aa). C93 and C113 are disulfide-bonded.

The protein belongs to the cystatin family. In terms of tissue distribution, expressed by the venom gland (posterior main gland) (at protein level).

Its subcellular location is the secreted. The protein is Cystatin Pr17a of Platymeris rhadamanthus (Red spot assassin bug).